Reading from the N-terminus, the 263-residue chain is Mediator of RNA polymerase II transcription subunit 7 (263 aa).

Positions 1-10 are enriched in polar residues; that stretch reads MADAAQQRTL. Disordered stretches follow at residues 1 to 57, 101 to 122, and 222 to 247; these read MADA…PAEL, ITQL…SEPS, and GIAA…QKTI. The segment covering 24-47 has biased composition (basic and acidic residues); sequence FTPDNLKRLEEIKKEASKGEDGKP. A compositionally biased stretch (polar residues) spans 101–111; it reads ITQLYPSSSPA. Positions 234 to 247 are enriched in basic and acidic residues; that stretch reads EDGRKESETSQKTI.

This sequence belongs to the Mediator complex subunit 7 family. In terms of assembly, component of the Mediator complex.

It localises to the nucleus. Functionally, component of the Mediator complex, a coactivator involved in the regulated transcription of nearly all RNA polymerase II-dependent genes. Mediator functions as a bridge to convey information from gene-specific regulatory proteins to the basal RNA polymerase II transcription machinery. Mediator is recruited to promoters by direct interactions with regulatory proteins and serves as a scaffold for the assembly of a functional preinitiation complex with RNA polymerase II and the general transcription factors. This chain is Mediator of RNA polymerase II transcription subunit 7 (med7), found in Aspergillus niger (strain ATCC MYA-4892 / CBS 513.88 / FGSC A1513).